A 114-amino-acid chain; its full sequence is NADH-ubiquinone oxidoreductase chain 3 (114 aa).

The next 3 membrane-spanning stretches (helical) occupy residues 3 to 23 (ATILMIAMTLSTILAILSFWL), 54 to 74 (FFLIAILFLLFDLEIALLLPF), and 85 to 105 (IVILWAALILTLLTLGLIYEW).

Belongs to the complex I subunit 3 family.

It localises to the mitochondrion membrane. The enzyme catalyses a ubiquinone + NADH + 5 H(+)(in) = a ubiquinol + NAD(+) + 4 H(+)(out). Its function is as follows. Core subunit of the mitochondrial membrane respiratory chain NADH dehydrogenase (Complex I) that is believed to belong to the minimal assembly required for catalysis. Complex I functions in the transfer of electrons from NADH to the respiratory chain. The immediate electron acceptor for the enzyme is believed to be ubiquinone. This is NADH-ubiquinone oxidoreductase chain 3 (mt-nd3) from Xenopus laevis (African clawed frog).